A 269-amino-acid polypeptide reads, in one-letter code: Formamidopyrimidine-DNA glycosylase (269 aa).

The active-site Schiff-base intermediate with DNA is the proline 2. Glutamate 3 (proton donor) is an active-site residue. Lysine 57 acts as the Proton donor; for beta-elimination activity in catalysis. Residues histidine 90, arginine 109, and lysine 150 each contribute to the DNA site. The segment at 235–269 adopts an FPG-type zinc-finger fold; it reads QVYGRKGEPCRVCGTPIVATKHAQRATFYCRHCQK. Arginine 259 serves as the catalytic Proton donor; for delta-elimination activity.

This sequence belongs to the FPG family. Monomer. Zn(2+) serves as cofactor.

It catalyses the reaction Hydrolysis of DNA containing ring-opened 7-methylguanine residues, releasing 2,6-diamino-4-hydroxy-5-(N-methyl)formamidopyrimidine.. The catalysed reaction is 2'-deoxyribonucleotide-(2'-deoxyribose 5'-phosphate)-2'-deoxyribonucleotide-DNA = a 3'-end 2'-deoxyribonucleotide-(2,3-dehydro-2,3-deoxyribose 5'-phosphate)-DNA + a 5'-end 5'-phospho-2'-deoxyribonucleoside-DNA + H(+). Involved in base excision repair of DNA damaged by oxidation or by mutagenic agents. Acts as a DNA glycosylase that recognizes and removes damaged bases. Has a preference for oxidized purines, such as 7,8-dihydro-8-oxoguanine (8-oxoG). Has AP (apurinic/apyrimidinic) lyase activity and introduces nicks in the DNA strand. Cleaves the DNA backbone by beta-delta elimination to generate a single-strand break at the site of the removed base with both 3'- and 5'-phosphates. The polypeptide is Formamidopyrimidine-DNA glycosylase (Salmonella dublin (strain CT_02021853)).